A 377-amino-acid polypeptide reads, in one-letter code: Probable glucokinase 2 (377 aa).

Cys-27–Ser-32 contacts ATP.

The protein belongs to the bacterial glucokinase family.

The catalysed reaction is D-glucose + ATP = D-glucose 6-phosphate + ADP + H(+). This chain is Probable glucokinase 2 (GK2), found in Trichomonas vaginalis.